The primary structure comprises 320 residues: Probable trehalose-phosphate phosphatase C (320 aa).

This sequence belongs to the trehalose phosphatase family. A divalent metal cation is required as a cofactor.

The enzyme catalyses alpha,alpha-trehalose 6-phosphate + H2O = alpha,alpha-trehalose + phosphate. It functions in the pathway glycan biosynthesis; trehalose biosynthesis. Functionally, removes the phosphate from trehalose 6-phosphate to produce free trehalose. Trehalose accumulation in plant may improve abiotic stress tolerance. The chain is Probable trehalose-phosphate phosphatase C (TPPC) from Arabidopsis thaliana (Mouse-ear cress).